Here is a 255-residue protein sequence, read N- to C-terminus: Large ribosomal subunit protein uL4 (255 aa).

It belongs to the universal ribosomal protein uL4 family. Part of the 50S ribosomal subunit.

In terms of biological role, one of the primary rRNA binding proteins, this protein initially binds near the 5'-end of the 23S rRNA. It is important during the early stages of 50S assembly. It makes multiple contacts with different domains of the 23S rRNA in the assembled 50S subunit and ribosome. Forms part of the polypeptide exit tunnel. This is Large ribosomal subunit protein uL4 from Thermoplasma acidophilum (strain ATCC 25905 / DSM 1728 / JCM 9062 / NBRC 15155 / AMRC-C165).